The following is a 180-amino-acid chain: Protein GrpE (180 aa).

Residues 1–25 (MSKKKAEDKQPIIKDEAVEEPKSDS) are disordered.

This sequence belongs to the GrpE family. As to quaternary structure, homodimer.

The protein resides in the cytoplasm. In terms of biological role, participates actively in the response to hyperosmotic and heat shock by preventing the aggregation of stress-denatured proteins, in association with DnaK and GrpE. It is the nucleotide exchange factor for DnaK and may function as a thermosensor. Unfolded proteins bind initially to DnaJ; upon interaction with the DnaJ-bound protein, DnaK hydrolyzes its bound ATP, resulting in the formation of a stable complex. GrpE releases ADP from DnaK; ATP binding to DnaK triggers the release of the substrate protein, thus completing the reaction cycle. Several rounds of ATP-dependent interactions between DnaJ, DnaK and GrpE are required for fully efficient folding. The chain is Protein GrpE from Fructilactobacillus sanfranciscensis (Lactobacillus sanfranciscensis).